The chain runs to 313 residues: Serine/threonine-protein phosphatase PP2A-4 catalytic subunit (313 aa).

Mn(2+)-binding residues include D61, H63, D89, and N121. The active-site Proton donor is H122. Positions 171 and 245 each coordinate Mn(2+). L313 bears the Leucine methyl ester mark.

The protein belongs to the PPP phosphatase family. PP-2A subfamily. PP2A consists of a common heterodimeric core enzyme, composed of a 36 kDa catalytic subunit (subunit C) and a 65 kDa constant regulatory subunit (subunit A), that associates with a variety of regulatory subunits such as subunits B (the R2/B/PR55/B55, R3/B''/PR72/PR130/PR59 and R5/B'/B56 families). Interacts with SIC/RON3. It depends on Mn(2+) as a cofactor. Reversibly methyl esterified on Leu-313 by leucine carboxyl methyltransferase 1 (LCMT1) and pectin methylesterase 1 (PME1). Carboxyl methylation influences the affinity of the catalytic subunit for the different regulatory subunits, thereby modulating the PP2A holoenzyme's substrate specificity, enzyme activity and cellular localization. Post-translationally, phosphorylation of either threonine (by autophosphorylation-activated protein kinase) or tyrosine results in inactivation of the phosphatase. Auto-dephosphorylation has been suggested as a mechanism for reactivation.

The protein resides in the cytoplasm. The catalysed reaction is O-phospho-L-seryl-[protein] + H2O = L-seryl-[protein] + phosphate. It carries out the reaction O-phospho-L-threonyl-[protein] + H2O = L-threonyl-[protein] + phosphate. Functions redundantly with PP2A3, and is involved in establishing auxin gradients, apical-basal axis of polarity and root and shoot apical meristem during embryogenesis. May dephosphorylate PIN1 and regulate its subcellular distribution for polar auxin transport. The holoenzyme composed of PP2AA1, PP2A4 and B'ZETA or B'ETA acts as a negative regulator of plant innate immunity by controlling BAK1 phosphorylation state and activation in surface-localized immune receptor complexes. The chain is Serine/threonine-protein phosphatase PP2A-4 catalytic subunit from Arabidopsis thaliana (Mouse-ear cress).